The chain runs to 233 residues: DNA repair protein RecO (233 aa).

The protein belongs to the RecO family.

Functionally, involved in DNA repair and RecF pathway recombination. The sequence is that of DNA repair protein RecO from Pseudomonas paraeruginosa (strain DSM 24068 / PA7) (Pseudomonas aeruginosa (strain PA7)).